The primary structure comprises 495 residues: UDP-N-acetylmuramoyl-L-alanyl-D-glutamate--2,6-diaminopimelate ligase (495 aa).

Residues Leu-27, Ser-29, and 44–46 (HKA) contribute to the UDP-N-acetyl-alpha-D-muramoyl-L-alanyl-D-glutamate site. Position 116–122 (116–122 (GTNGKTT)) interacts with ATP. UDP-N-acetyl-alpha-D-muramoyl-L-alanyl-D-glutamate is bound by residues Asn-157, 158–159 (TT), Ser-185, Gln-191, and Arg-193. An N6-carboxylysine modification is found at Lys-225. Residues Arg-390, 414–417 (DNPR), Gly-465, and Glu-469 each bind meso-2,6-diaminopimelate. A Meso-diaminopimelate recognition motif motif is present at residues 414 to 417 (DNPR).

This sequence belongs to the MurCDEF family. MurE subfamily. It depends on Mg(2+) as a cofactor. Post-translationally, carboxylation is probably crucial for Mg(2+) binding and, consequently, for the gamma-phosphate positioning of ATP.

The protein resides in the cytoplasm. It carries out the reaction UDP-N-acetyl-alpha-D-muramoyl-L-alanyl-D-glutamate + meso-2,6-diaminopimelate + ATP = UDP-N-acetyl-alpha-D-muramoyl-L-alanyl-gamma-D-glutamyl-meso-2,6-diaminopimelate + ADP + phosphate + H(+). It participates in cell wall biogenesis; peptidoglycan biosynthesis. In terms of biological role, catalyzes the addition of meso-diaminopimelic acid to the nucleotide precursor UDP-N-acetylmuramoyl-L-alanyl-D-glutamate (UMAG) in the biosynthesis of bacterial cell-wall peptidoglycan. This Pectobacterium atrosepticum (strain SCRI 1043 / ATCC BAA-672) (Erwinia carotovora subsp. atroseptica) protein is UDP-N-acetylmuramoyl-L-alanyl-D-glutamate--2,6-diaminopimelate ligase.